Here is a 260-residue protein sequence, read N- to C-terminus: Shikimate dehydrogenase (NADP(+)) (260 aa).

Residues 14–16 (SAS) and threonine 60 each bind shikimate. Lysine 64 (proton acceptor) is an active-site residue. Positions 85 and 100 each coordinate shikimate. Residues 121 to 125 (GAGGA), 145 to 150 (NRTYER), and phenylalanine 201 each bind NADP(+). Residue tyrosine 203 participates in shikimate binding. Residue glycine 225 participates in NADP(+) binding.

This sequence belongs to the shikimate dehydrogenase family. As to quaternary structure, homodimer.

It carries out the reaction shikimate + NADP(+) = 3-dehydroshikimate + NADPH + H(+). Its pathway is metabolic intermediate biosynthesis; chorismate biosynthesis; chorismate from D-erythrose 4-phosphate and phosphoenolpyruvate: step 4/7. Involved in the biosynthesis of the chorismate, which leads to the biosynthesis of aromatic amino acids. Catalyzes the reversible NADPH linked reduction of 3-dehydroshikimate (DHSA) to yield shikimate (SA). This Pyrobaculum islandicum (strain DSM 4184 / JCM 9189 / GEO3) protein is Shikimate dehydrogenase (NADP(+)).